The following is a 208-amino-acid chain: Guanylate kinase (208 aa).

Positions 4 to 182 constitute a Guanylate kinase-like domain; that stretch reads GQLYIISAPS…ALEELKSVFR (179 aa). 11–18 serves as a coordination point for ATP; it reads APSGAGKT.

Belongs to the guanylate kinase family.

Its subcellular location is the cytoplasm. It carries out the reaction GMP + ATP = GDP + ADP. Functionally, essential for recycling GMP and indirectly, cGMP. This chain is Guanylate kinase, found in Hahella chejuensis (strain KCTC 2396).